The sequence spans 499 residues: Glycerol kinase (499 aa).

T17 is an ADP binding site. The ATP site is built by T17, T18, and S19. T17 contacts sn-glycerol 3-phosphate. R21 contributes to the ADP binding site. 4 residues coordinate sn-glycerol 3-phosphate: R87, E88, Y139, and D243. Glycerol-binding residues include R87, E88, Y139, D243, and Q244. Residues T265 and G308 each contribute to the ADP site. 4 residues coordinate ATP: T265, G308, Q312, and G409. ADP contacts are provided by G409 and N413.

The protein belongs to the FGGY kinase family.

It catalyses the reaction glycerol + ATP = sn-glycerol 3-phosphate + ADP + H(+). Its pathway is polyol metabolism; glycerol degradation via glycerol kinase pathway; sn-glycerol 3-phosphate from glycerol: step 1/1. Its activity is regulated as follows. Inhibited by fructose 1,6-bisphosphate (FBP). Its function is as follows. Key enzyme in the regulation of glycerol uptake and metabolism. Catalyzes the phosphorylation of glycerol to yield sn-glycerol 3-phosphate. This is Glycerol kinase from Pseudomonas entomophila (strain L48).